A 1444-amino-acid polypeptide reads, in one-letter code: Protein shortage in chiasmata 1 ortholog (1444 aa).

The segment covering 1106-1117 (SITKSPQISSPQ) has biased composition (low complexity). The tract at residues 1106–1129 (SITKSPQISSPQENRNQISTLSSQ) is disordered.

Belongs to the XPF family. Highly divergent. In terms of assembly, interacts with TEX11. Interacts with SPO16.

The protein resides in the chromosome. Functionally, ATPase required during meiosis for the formation of crossover recombination intermediates. Binds DNA: preferentially binds to single-stranded DNA and DNA branched structures. Does not show nuclease activity in vitro, but shows ATPase activity, which is stimulated by the presence of single-stranded DNA. Plays a key role in homologous recombination and crossing-over in meiotic prophase I in male and female germ cells. Required for proper synaptonemal complex assembly and homologous chromosome pairing. Requiref for recruitment TEX11 and MSH4 to recombination intermediates. This is Protein shortage in chiasmata 1 ortholog from Homo sapiens (Human).